Consider the following 116-residue polypeptide: Putative iron-sulfur cluster insertion protein ErpA (116 aa).

Positions 44, 108, and 110 each coordinate iron-sulfur cluster.

This sequence belongs to the HesB/IscA family. Homodimer. Iron-sulfur cluster is required as a cofactor.

Functionally, required for insertion of 4Fe-4S clusters. This chain is Putative iron-sulfur cluster insertion protein ErpA, found in Thiobacillus denitrificans (strain ATCC 25259 / T1).